The primary structure comprises 213 residues: Pyridoxine/pyridoxamine 5'-phosphate oxidase (213 aa).

Substrate contacts are provided by residues 9–12 (RLEY) and K67. FMN contacts are provided by residues 62–67 (RIVLLK), 77–78 (YT), R83, K84, and Q106. Residues Y124, R128, and S132 each contribute to the substrate site. FMN is bound by residues 141 to 142 (QS) and W185. 191–193 (RLH) provides a ligand contact to substrate. R195 lines the FMN pocket.

It belongs to the pyridoxamine 5'-phosphate oxidase family. As to quaternary structure, homodimer. FMN is required as a cofactor.

It catalyses the reaction pyridoxamine 5'-phosphate + O2 + H2O = pyridoxal 5'-phosphate + H2O2 + NH4(+). It carries out the reaction pyridoxine 5'-phosphate + O2 = pyridoxal 5'-phosphate + H2O2. It participates in cofactor metabolism; pyridoxal 5'-phosphate salvage; pyridoxal 5'-phosphate from pyridoxamine 5'-phosphate: step 1/1. The protein operates within cofactor metabolism; pyridoxal 5'-phosphate salvage; pyridoxal 5'-phosphate from pyridoxine 5'-phosphate: step 1/1. Its function is as follows. Catalyzes the oxidation of either pyridoxine 5'-phosphate (PNP) or pyridoxamine 5'-phosphate (PMP) into pyridoxal 5'-phosphate (PLP). In Chromobacterium violaceum (strain ATCC 12472 / DSM 30191 / JCM 1249 / CCUG 213 / NBRC 12614 / NCIMB 9131 / NCTC 9757 / MK), this protein is Pyridoxine/pyridoxamine 5'-phosphate oxidase.